A 158-amino-acid polypeptide reads, in one-letter code: Putative ribonucleoside-diphosphate reductase small chain B (158 aa).

The protein belongs to the ribonucleoside diphosphate reductase small chain family.

This is Putative ribonucleoside-diphosphate reductase small chain B (RNR2B) from Arabidopsis thaliana (Mouse-ear cress).